The following is an 836-amino-acid chain: Ethylene receptor 3 (836 aa).

The next 3 helical transmembrane spans lie at 137–157 (LIAA…AGLR), 166–186 (LVQF…TAFT), and 204–224 (LTAL…PQLL). Cu cation-binding residues include Cys-176 and His-180. The GAF domain maps to 269 to 413 (DRHTVLYTTL…VVAGQVAVAL (145 aa)). The stretch at 416–452 (ATLLEESRAMRDRLAEQNRELLQARRDALMANEARQA) forms a coiled coil. One can recognise a Histidine kinase domain in the interval 457–691 (MSQGMRRPIH…LVLRFQLQSP (235 aa)). Residues 718–834 (LLIDDDDDIN…LKDELARILQ (117 aa)) form the Response regulatory domain.

Belongs to the ethylene receptor family. Cu cation serves as cofactor.

The protein localises to the endoplasmic reticulum membrane. The enzyme catalyses ATP + protein L-histidine = ADP + protein N-phospho-L-histidine.. In terms of biological role, ethylene receptor related to bacterial two-component regulators. Acts as a negative regulator of ethylene signaling. May delay the transition from the vegetative stage to the floral stage by up-regulating GI (GIGANTEA) and RCN1 and cause starch accumulation in stems by down-regulating the alpha-amylase AMY3D. In Oryza sativa subsp. indica (Rice), this protein is Ethylene receptor 3.